The primary structure comprises 76 residues: Kappa-actitoxin-Avd4n (76 aa).

A signal peptide spans 1-19 (MNKAFFLCLVVLCAAVVFA). Positions 20-31 (AEDLQKGKHAPF) are excised as a propeptide. Intrachain disulfides connect Cys37/Cys72 and Cys39/Cys65.

Belongs to the sea anemone type 3 (BDS) potassium channel toxin family. Lacks the conventional Cys residue at position 55. Thus, only 2 disulfide are possible present. In terms of tissue distribution, experimental results show no expression in the ectodermal tissue from the distal and proximal tentacles, body wall, and oral disk. Since paralogs are expressed in this tissue, an expression of this toxin in this tissue is probable. The negative results could be explained by the very low abundance of EST sequences.

It is found in the secreted. It localises to the nematocyst. Blocks Kv3 voltage-gated potassium channels. Reduces blood pressure. The sequence is that of Kappa-actitoxin-Avd4n from Anemonia viridis (Snakelocks anemone).